We begin with the raw amino-acid sequence, 739 residues long: Endoglucanase F (739 aa).

The first 27 residues, 1–27 (MKKILAFLLTVALVAVVAIPQAVVSFA), serve as a signal peptide directing secretion. Residues 28 to 470 (ADFNYGEALQ…AKMYEKYGGE (443 aa)) are catalytic. D84 functions as the Nucleophile in the catalytic mechanism. Residues H400, D438, and E447 contribute to the active site. The CBM3 domain maps to 480–639 (TPGEEFYVEA…NVRVWGKVPD (160 aa)). The 74-residue stretch at 664-737 (PGIMLGDVNF…ILKLIEKFPA (74 aa)) folds into the Dockerin domain.

It belongs to the glycosyl hydrolase 9 (cellulase E) family. Requires Ca(2+) as cofactor.

The catalysed reaction is Endohydrolysis of (1-&gt;4)-beta-D-glucosidic linkages in cellulose, lichenin and cereal beta-D-glucans.. Functionally, this enzyme catalyzes the endohydrolysis of 1,4-beta-glucosidic linkages in cellulose, lichenin and cereal beta-D-glucans. This chain is Endoglucanase F (celF), found in Acetivibrio thermocellus (strain ATCC 27405 / DSM 1237 / JCM 9322 / NBRC 103400 / NCIMB 10682 / NRRL B-4536 / VPI 7372) (Clostridium thermocellum).